The primary structure comprises 1060 residues: Carbamoyl phosphate synthase large chain (1060 aa).

The tract at residues 1 to 401 (MPKRTDIRKI…SLLKACRSLE (401 aa)) is carboxyphosphate synthetic domain. Residues R129, R169, G175, G176, R208, I210, E215, G241, I242, H243, Q284, and E298 each contribute to the ATP site. The ATP-grasp 1 domain maps to 133-327 (KQLMEELNQP…IAKLAAKIAV (195 aa)). 3 residues coordinate Mg(2+): Q284, E298, and N300. Residues Q284, E298, and N300 each coordinate Mn(2+). An oligomerization domain region spans residues 402-546 (IGVDHIKIAD…YSTYAVENES (145 aa)). The interval 547–929 (LISDKASILV…ALYKAFEAAY (383 aa)) is carbamoyl phosphate synthetic domain. In terms of domain architecture, ATP-grasp 2 spans 671–861 (EATLQALNIP…MAQVATKVIL (191 aa)). Residues R707, A746, L748, E752, G777, V778, H779, S780, Q820, and E832 each contribute to the ATP site. The Mg(2+) site is built by Q820, E832, and N834. Mn(2+)-binding residues include Q820, E832, and N834. An MGS-like domain is found at 930 to 1060 (LHMPDYGNIV…SRAFTLKVLD (131 aa)). The interval 930–1060 (LHMPDYGNIV…SRAFTLKVLD (131 aa)) is allosteric domain.

This sequence belongs to the CarB family. In terms of assembly, composed of two chains; the small (or glutamine) chain promotes the hydrolysis of glutamine to ammonia, which is used by the large (or ammonia) chain to synthesize carbamoyl phosphate. Tetramer of heterodimers (alpha,beta)4. Requires Mg(2+) as cofactor. The cofactor is Mn(2+).

The catalysed reaction is hydrogencarbonate + L-glutamine + 2 ATP + H2O = carbamoyl phosphate + L-glutamate + 2 ADP + phosphate + 2 H(+). It carries out the reaction hydrogencarbonate + NH4(+) + 2 ATP = carbamoyl phosphate + 2 ADP + phosphate + 2 H(+). It participates in amino-acid biosynthesis; L-arginine biosynthesis; carbamoyl phosphate from bicarbonate: step 1/1. It functions in the pathway pyrimidine metabolism; UMP biosynthesis via de novo pathway; (S)-dihydroorotate from bicarbonate: step 1/3. In terms of biological role, large subunit of the glutamine-dependent carbamoyl phosphate synthetase (CPSase). CPSase catalyzes the formation of carbamoyl phosphate from the ammonia moiety of glutamine, carbonate, and phosphate donated by ATP, constituting the first step of 2 biosynthetic pathways, one leading to arginine and/or urea and the other to pyrimidine nucleotides. The large subunit (synthetase) binds the substrates ammonia (free or transferred from glutamine from the small subunit), hydrogencarbonate and ATP and carries out an ATP-coupled ligase reaction, activating hydrogencarbonate by forming carboxy phosphate which reacts with ammonia to form carbamoyl phosphate. This is Carbamoyl phosphate synthase large chain from Streptococcus agalactiae serotype V (strain ATCC BAA-611 / 2603 V/R).